Reading from the N-terminus, the 173-residue chain is NADH-ubiquinone oxidoreductase chain 6 (173 aa).

5 helical membrane passes run 1-21, 27-47, 48-68, 87-107, and 139-159; these read MTYF…AVAS, YGVV…LSLG, VSFV…VVFV, VVGY…VGGL, and CGVG…FVVL.

The protein belongs to the complex I subunit 6 family.

The protein localises to the mitochondrion membrane. The enzyme catalyses a ubiquinone + NADH + 5 H(+)(in) = a ubiquinol + NAD(+) + 4 H(+)(out). In terms of biological role, core subunit of the mitochondrial membrane respiratory chain NADH dehydrogenase (Complex I) that is believed to belong to the minimal assembly required for catalysis. Complex I functions in the transfer of electrons from NADH to the respiratory chain. The immediate electron acceptor for the enzyme is believed to be ubiquinone. In Synthliboramphus wumizusume (Japanese murrelet), this protein is NADH-ubiquinone oxidoreductase chain 6 (MT-ND6).